The chain runs to 967 residues: Leucine--tRNA ligase (967 aa).

A 'HIGH' region motif is present at residues 43–53 (PYLSGHLHVGH). A 'KMSKS' region motif is present at residues 650-654 (KMSKS). An ATP-binding site is contributed by lysine 653.

The protein belongs to the class-I aminoacyl-tRNA synthetase family.

The protein resides in the cytoplasm. It carries out the reaction tRNA(Leu) + L-leucine + ATP = L-leucyl-tRNA(Leu) + AMP + diphosphate. In Pyrococcus furiosus (strain ATCC 43587 / DSM 3638 / JCM 8422 / Vc1), this protein is Leucine--tRNA ligase.